We begin with the raw amino-acid sequence, 383 residues long: U-box domain-containing protein 63 (383 aa).

A disordered region spans residues 166–186 (PDGNVSNSHRNTQQKRDFASV). In terms of domain architecture, U-box spans 201 to 273 (SLKAILSDPV…HAFRQEEDSD (73 aa)).

It catalyses the reaction S-ubiquitinyl-[E2 ubiquitin-conjugating enzyme]-L-cysteine + [acceptor protein]-L-lysine = [E2 ubiquitin-conjugating enzyme]-L-cysteine + N(6)-ubiquitinyl-[acceptor protein]-L-lysine.. The protein operates within protein modification; protein ubiquitination. Functionally, functions as an E3 ubiquitin ligase. The sequence is that of U-box domain-containing protein 63 (PUB63) from Arabidopsis thaliana (Mouse-ear cress).